The primary structure comprises 221 residues: MSVIATQMTYKVYMSGTVNGHYFEVEGDGKGRPYEGEQTVKLTVTKGGPLPFAWDILSPQCQYGSIPFTKYPEDIPDYVKQSFPEGFTWERIMNFEDGAVCTVSNDSSIQGNCFTYHVKFSGLNFPPNGPVMQKKTQGWEPHSERLFARGGMLIGNNFMALKLEGGGHYLCEFKTTYKAKKPVKMPGYHYVDRKLDVTNHNKDYTSVEQCEISIARKPVVA.

The segment at residues 62–64 is a cross-link (2-iminomethyl-5-imidazolinone (Gln-Gly)); the sequence is QYG. Tyrosine 63 is subject to (E)-2,3-didehydrotyrosine.

It belongs to the GFP family. Homotetramer. Contains a chromophore consisting of modified amino acid residues. The chromophore is formed by autocatalytic backbone condensation between Xaa-N and Gly-(N+2), oxidation of Tyr-(N+1) to didehydrotyrosine, and formation of a double bond to the alpha-amino nitrogen of residue Xaa-N. Maturation of the chromophore requires nothing other than molecular oxygen.

Functionally, thought to play a role in photoprotection of the coral's resident symbiont microalgae's photosystems from photoinhibition caused by high light levels found near the surface of coral reefs. The polypeptide is GFP-like non-fluorescent chromoprotein (Montipora efflorescens (Pore coral)).